A 734-amino-acid polypeptide reads, in one-letter code: Photosystem I P700 chlorophyll a apoprotein A2 (734 aa).

8 consecutive transmembrane segments (helical) span residues 46–69 (IFAS…FHVA), 135–158 (LYSG…LHLQ), 175–199 (LNHH…HVAI), 273–291 (IAHH…GHMY), 330–353 (LHFQ…QHMY), 369–395 (AALY…IFFV), 417–439 (AIIS…LYVH), and 517–535 (FLVH…LILV). Cys559 and Cys568 together coordinate [4Fe-4S] cluster. The next 2 membrane-spanning stretches (helical) occupy residues 575 to 596 (AFYL…YWHW) and 643 to 665 (LSVW…MFLI). Residues His654, Met662, and Tyr670 each contribute to the chlorophyll a site. Residue Trp671 coordinates phylloquinone. A helical transmembrane segment spans residues 707 to 727 (LVGLVHFTVGYIFTYAAFVIA).

It belongs to the PsaA/PsaB family. The PsaA/B heterodimer binds the P700 chlorophyll special pair and subsequent electron acceptors. PSI consists of a core antenna complex that captures photons, and an electron transfer chain that converts photonic excitation into a charge separation. The eukaryotic PSI reaction center is composed of at least 11 subunits. It depends on P700 is a chlorophyll a/chlorophyll a' dimer, A0 is one or more chlorophyll a, A1 is one or both phylloquinones and FX is a shared 4Fe-4S iron-sulfur center. as a cofactor.

The protein resides in the plastid. Its subcellular location is the chloroplast thylakoid membrane. It carries out the reaction reduced [plastocyanin] + hnu + oxidized [2Fe-2S]-[ferredoxin] = oxidized [plastocyanin] + reduced [2Fe-2S]-[ferredoxin]. Functionally, psaA and PsaB bind P700, the primary electron donor of photosystem I (PSI), as well as the electron acceptors A0, A1 and FX. PSI is a plastocyanin/cytochrome c6-ferredoxin oxidoreductase, converting photonic excitation into a charge separation, which transfers an electron from the donor P700 chlorophyll pair to the spectroscopically characterized acceptors A0, A1, FX, FA and FB in turn. Oxidized P700 is reduced on the lumenal side of the thylakoid membrane by plastocyanin or cytochrome c6. This Guillardia theta (Cryptophyte) protein is Photosystem I P700 chlorophyll a apoprotein A2.